We begin with the raw amino-acid sequence, 506 residues long: ATP-dependent rRNA helicase RRP3 (506 aa).

Disordered stretches follow at residues 1–22 (MSGKVDKKKGSSVKKTEGKSKE) and 37–88 (NQKK…FESF). Positions 49–69 (SDQEDDPSESEEEEGSDSEDV) are enriched in acidic residues. Positions 86–114 (ESFSDLDLVPELIEACKNLNFAKPTPIQA) match the Q motif motif. The 173-residue stretch at 117–289 (IPPALQGHDI…RASLTNPVKC (173 aa)) folds into the Helicase ATP-binding domain. 130 to 137 (AQTGSGKT) lines the ATP pocket. The DEAD box signature appears at 236 to 239 (DEAD). Residues 312–460 (LKNTYLIYLM…KENVNKDAIL (149 aa)) form the Helicase C-terminal domain. The disordered stretch occupies residues 485–506 (IARGKGRRGRMAARDDMDKGER). Residues 496-506 (AARDDMDKGER) show a composition bias toward basic and acidic residues.

Belongs to the DEAD box helicase family. DDX47/RRP3 subfamily. In terms of assembly, interacts with the SSU processome.

The protein localises to the nucleus. It carries out the reaction ATP + H2O = ADP + phosphate + H(+). In terms of biological role, ATP-dependent rRNA helicase required for pre-ribosomal RNA processing. Involved in the maturation of the 35S-pre-rRNA and to its cleavage to mature 18S rRNA. The protein is ATP-dependent rRNA helicase RRP3 of Vanderwaltozyma polyspora (strain ATCC 22028 / DSM 70294 / BCRC 21397 / CBS 2163 / NBRC 10782 / NRRL Y-8283 / UCD 57-17) (Kluyveromyces polysporus).